A 1114-amino-acid polypeptide reads, in one-letter code: Pre-mRNA-processing ATP-dependent RNA helicase prp5 (1114 aa).

3 disordered regions span residues Val20–Ala168, Val181–Ser200, and Arg257–Glu356. 2 stretches are compositionally biased toward basic and acidic residues: residues Arg31–Arg67 and Glu93–Leu122. Residues Ser141–Ser156 show a composition bias toward low complexity. Composition is skewed to basic and acidic residues over residues Leu190–Ser200 and Arg257–Lys273. Over residues Gly295–Ala313 the composition is skewed to acidic residues. Basic and acidic residues predominate over residues Ala320 to Glu330. A Q motif motif is present at residues Gln483 to Met511. A Helicase ATP-binding domain is found at Ile514 to Ile692. ATP is bound at residue Ala527–Thr534. The short motif at Asp640–Asp643 is the DEAD box element. One can recognise a Helicase C-terminal domain in the interval Glu703–Arg867. Composition is skewed to basic and acidic residues over residues Ser869–Ser882 and Gly889–Ala902. The disordered stretch occupies residues Ser869–Asp924. Positions Asp913–Asp924 are enriched in acidic residues.

It belongs to the DEAD box helicase family. DDX46/PRP5 subfamily.

Its subcellular location is the nucleus. The catalysed reaction is ATP + H2O = ADP + phosphate + H(+). Functionally, ATP-dependent RNA helicase involved spliceosome assembly and in nuclear splicing. Catalyzes an ATP-dependent conformational change of U2 snRNP. Bridges U1 and U2 snRNPs and enables stable U2 snRNP association with intron RNA. In Sclerotinia sclerotiorum (strain ATCC 18683 / 1980 / Ss-1) (White mold), this protein is Pre-mRNA-processing ATP-dependent RNA helicase prp5 (prp5).